The chain runs to 201 residues: 3-isopropylmalate dehydratase small subunit (201 aa).

It belongs to the LeuD family. LeuD type 1 subfamily. In terms of assembly, heterodimer of LeuC and LeuD.

The catalysed reaction is (2R,3S)-3-isopropylmalate = (2S)-2-isopropylmalate. Its pathway is amino-acid biosynthesis; L-leucine biosynthesis; L-leucine from 3-methyl-2-oxobutanoate: step 2/4. In terms of biological role, catalyzes the isomerization between 2-isopropylmalate and 3-isopropylmalate, via the formation of 2-isopropylmaleate. This is 3-isopropylmalate dehydratase small subunit from Shewanella woodyi (strain ATCC 51908 / MS32).